A 780-amino-acid chain; its full sequence is Protein SEY1 (780 aa).

Residues 1-680 (MDSKEEAIQL…KRSMIKTTTH (680 aa)) are Cytoplasmic-facing. In terms of domain architecture, GB1/RHD3-type G spans 35–265 (GVNYHVISVF…NEDYYFKPEY (231 aa)). 45 to 52 (GSQSSGKS) is a binding site for GTP. The stretch at 440 to 463 (EVKEEVVKRFENDLKETSDKLRVT) forms a coiled coil. The chain crosses the membrane as a helical span at residues 681–701 (IPLWIYAIIVVLGWNEFMMVI). The Lumenal portion of the chain corresponds to 702–704 (RNP). A helical transmembrane segment spans residues 705 to 725 (LFVTLTILILVSFYFINKFDL). Residues 726 to 780 (WGPVKSVAQTAAGETIGTIKTKLRDFVLEEHEKTPKIQSEKSNSDSEKVVENEKS) lie on the Cytoplasmic side of the membrane. Residues 756-780 (HEKTPKIQSEKSNSDSEKVVENEKS) are disordered.

Belongs to the TRAFAC class dynamin-like GTPase superfamily. GB1/RHD3 GTPase family. RHD3 subfamily.

The protein localises to the endoplasmic reticulum membrane. Cooperates with the reticulon proteins and tubule-shaping DP1 family proteins to generate and maintain the structure of the tubular endoplasmic reticulum network. Has GTPase activity, which is required for its function in ER organization. The sequence is that of Protein SEY1 from Vanderwaltozyma polyspora (strain ATCC 22028 / DSM 70294 / BCRC 21397 / CBS 2163 / NBRC 10782 / NRRL Y-8283 / UCD 57-17) (Kluyveromyces polysporus).